The following is a 363-amino-acid chain: Serine/threonine-protein kinase SRK2A (363 aa).

Positions 4 to 260 (YELVKDIGAG…IAEIKKHSWF (257 aa)) constitute a Protein kinase domain. ATP-binding positions include 10–18 (IGAGNFGVA) and Lys33. Asp123 serves as the catalytic Proton acceptor. A disordered region spans residues 306 to 363 (SRSIGGFGWGGNGDADGKEEDAEDVEEEEEEVEEEEDDEDEYDKTVKEVHASGEVRIS). Gly residues predominate over residues 310–319 (GGFGWGGNGD). Residues 322-347 (GKEEDAEDVEEEEEEVEEEEDDEDEY) are compositionally biased toward acidic residues. A compositionally biased stretch (basic and acidic residues) spans 348 to 363 (DKTVKEVHASGEVRIS).

It belongs to the protein kinase superfamily. Ser/Thr protein kinase family. Interacts with TOPP1. As to expression, expressed in seedlings.

The catalysed reaction is L-seryl-[protein] + ATP = O-phospho-L-seryl-[protein] + ADP + H(+). The enzyme catalyses L-threonyl-[protein] + ATP = O-phospho-L-threonyl-[protein] + ADP + H(+). The sequence is that of Serine/threonine-protein kinase SRK2A (SRK2A) from Arabidopsis thaliana (Mouse-ear cress).